Reading from the N-terminus, the 544-residue chain is Chaperonin GroEL (544 aa).

Residues 29–32 (TLGP), 86–90 (DGTTT), Gly413, 476–478 (NAA), and Asp492 each bind ATP.

It belongs to the chaperonin (HSP60) family. In terms of assembly, forms a cylinder of 14 subunits composed of two heptameric rings stacked back-to-back. Interacts with the co-chaperonin GroES.

The protein localises to the cytoplasm. The enzyme catalyses ATP + H2O + a folded polypeptide = ADP + phosphate + an unfolded polypeptide.. Its function is as follows. Together with its co-chaperonin GroES, plays an essential role in assisting protein folding. The GroEL-GroES system forms a nano-cage that allows encapsulation of the non-native substrate proteins and provides a physical environment optimized to promote and accelerate protein folding. This is Chaperonin GroEL from Bacillus mycoides (strain KBAB4) (Bacillus weihenstephanensis).